We begin with the raw amino-acid sequence, 596 residues long: Arginine--tRNA ligase (596 aa).

The short motif at 135–145 (ANPTGPIHIGG) is the 'HIGH' region element. Residues 227 to 249 (PRVDGGADQDGNPLGEGDSEQRE) form a disordered region.

It belongs to the class-I aminoacyl-tRNA synthetase family. Monomer.

It is found in the cytoplasm. The enzyme catalyses tRNA(Arg) + L-arginine + ATP = L-arginyl-tRNA(Arg) + AMP + diphosphate. In Bifidobacterium adolescentis (strain ATCC 15703 / DSM 20083 / NCTC 11814 / E194a), this protein is Arginine--tRNA ligase.